The sequence spans 195 residues: Peroxiredoxin bcp1 (195 aa).

The region spanning 46 to 168 is the Thioredoxin domain; the sequence is IQVGDVIPDI…SHWIFEKGTG (123 aa). The active-site Cysteine sulfenic acid (-SOH) intermediate is the Cys-89. Cysteines 89 and 94 form a disulfide.

It belongs to the peroxiredoxin family. BCP/PrxQ subfamily. In terms of assembly, monomer. In terms of processing, the active site is a conserved redox-active cysteine residue, the peroxidatic cysteine (C(P)), which makes the nucleophilic attack on the peroxide substrate. The peroxide oxidizes the C(P)-SH to cysteine sulfenic acid (C(P)-SOH), which then reacts with another cysteine residue, the resolving cysteine (C(R)), to form a disulfide bridge. The disulfide is subsequently reduced by an appropriate electron donor to complete the catalytic cycle. In this atypical 2-Cys peroxiredoxin, C(R) is present in the same subunit to form an intramolecular disulfide. The disulfide is subsequently reduced by thioredoxin.

It is found in the cytoplasm. Its subcellular location is the nucleus. It carries out the reaction a hydroperoxide + [thioredoxin]-dithiol = an alcohol + [thioredoxin]-disulfide + H2O. Functionally, thiol-specific peroxidase that catalyzes the reduction of hydrogen peroxide and organic hydroperoxides to water and alcohols, respectively. Plays a role in cell protection against oxidative stress by detoxifying peroxides and as sensor of hydrogen peroxide-mediated signaling events. Acts as a scavenger of H(2)O(2). The sequence is that of Peroxiredoxin bcp1 (bcp1) from Schizosaccharomyces pombe (strain 972 / ATCC 24843) (Fission yeast).